Here is a 991-residue protein sequence, read N- to C-terminus: Collagenase ColT (991 aa).

A signal peptide spans 1-28 (MKKKFIKMLCSIAIGCMISTSYSIKVSA). A propeptide spanning residues 29–52 (FSNGNTKTNPNGEFKSLSLNSTNP) is cleaved from the precursor. Positions 53-727 (YKTKYSFNDL…VYDIVFHGLL (675 aa)) are S1 metalloprotease domain, degrades FALGPA (furylacryloyl-Leu-Gly-Pro-Ala). The activator domain stretch occupies residues 57–330 (YSFNDLNKLS…AIEAIKEDFN (274 aa)). Residues 340–611 (DINKLIEEGK…MENLVNNYDN (272 aa)) are catalytic subdomain. A Ca(2+)-binding site is contributed by E440. A Zn(2+)-binding site is contributed by H465. Residue E466 is part of the active site. H469 is a binding site for Zn(2+). Residues G473, I477, and G479 each contribute to the Ca(2+) site. E499 contributes to the Zn(2+) binding site. Residues 619 to 731 (DDYMKQYDNK…VFHGLLSHNK (113 aa)) form a helper subdomain region. Collagen-binding domain stretches follow at residues 755-870 (IYEK…NISD) and 878-991 (IKKI…VIIN). 11 residues coordinate Ca(2+): E757, E759, N761, D784, D787, E883, E885, N887, D888, D910, and D913.

The protein belongs to the peptidase M9B family. Collagenase subfamily. It depends on Ca(2+) as a cofactor. The cofactor is Zn(2+).

The protein localises to the secreted. It carries out the reaction Digestion of native collagen in the triple helical region at Xaa-|-Gly bonds. With synthetic peptides, a preference is shown for Gly at P3 and P1', Pro and Ala at P2 and P2', and hydroxyproline, Ala or Arg at P3'.. Its activity is regulated as follows. Partially inhibited by 1-10-phenanthroline; inactivation is irreversible. Partially inhibited by EDTA; inactivation is reversible. Inhibited by broad-spectrum zinc metalloprotease inhibitor batimastat. N-aryl mercaptoacetamide-based inhibitors have been isolated that act on clostridial collagenases with submicromolar affinity while having negligibile activity on human collagenases. Clostridial collagenases are among the most efficient degraders of eukaryotic collagen known; saprophytes use collagen as a carbon source while pathogens additionally digest collagen to aid in host colonization. Has both tripeptidylcarboxypeptidase on Gly-X-Y and endopeptidase activities; the endopeptidase cuts within the triple helix region of collagen while tripeptidylcarboxypeptidase successively digests the exposed ends, thus clostridial collagenases can digest large sections of collagen. The activator domain (residues 57-330) and catalytic subdomain (340-611) open and close around substrate allowing digestion when the protein is closed. The polypeptide is Collagenase ColT (Clostridium tetani (strain Massachusetts / E88)).